Reading from the N-terminus, the 1374-residue chain is DNA-directed RNA polymerase subunit beta' (1374 aa).

Residues 1–47 are disordered; that stretch reads MTSTSPKSRKPSTKTTKSKSKSKSKSKAAKAAAASASPALARTPPQF. The span at 7–28 shows a compositional bias: basic residues; it reads KSRKPSTKTTKSKSKSKSKSKA. The span at 29–45 shows a compositional bias: low complexity; that stretch reads AKAAAASASPALARTPP. C258, C325, C332, and C335 together coordinate Zn(2+). The tract at residues 1343–1374 is disordered; that stretch reads VRPTGENELEEEQLPDPSALEGLQQEGLLTEE. Positions 1362–1374 are enriched in low complexity; it reads LEGLQQEGLLTEE.

It belongs to the RNA polymerase beta' chain family. RpoC2 subfamily. In terms of assembly, in cyanobacteria the RNAP catalytic core is composed of 2 alpha, 1 beta, 1 beta', 1 gamma and 1 omega subunit. When a sigma factor is associated with the core the holoenzyme is formed, which can initiate transcription. Zn(2+) serves as cofactor.

It carries out the reaction RNA(n) + a ribonucleoside 5'-triphosphate = RNA(n+1) + diphosphate. Functionally, DNA-dependent RNA polymerase catalyzes the transcription of DNA into RNA using the four ribonucleoside triphosphates as substrates. In Prochlorococcus marinus (strain MIT 9303), this protein is DNA-directed RNA polymerase subunit beta'.